A 543-amino-acid polypeptide reads, in one-letter code: Glucose-6-phosphate isomerase (543 aa).

The active-site Proton donor is glutamate 353. Residues histidine 384 and lysine 504 contribute to the active site.

The protein belongs to the GPI family.

The protein resides in the cytoplasm. The catalysed reaction is alpha-D-glucose 6-phosphate = beta-D-fructose 6-phosphate. It functions in the pathway carbohydrate biosynthesis; gluconeogenesis. Its pathway is carbohydrate degradation; glycolysis; D-glyceraldehyde 3-phosphate and glycerone phosphate from D-glucose: step 2/4. In terms of biological role, catalyzes the reversible isomerization of glucose-6-phosphate to fructose-6-phosphate. In Roseiflexus sp. (strain RS-1), this protein is Glucose-6-phosphate isomerase.